A 549-amino-acid chain; its full sequence is Cytochrome bc1 complex cytochrome b subunit (549 aa).

Residues 54-74 traverse the membrane as a helical segment; that stretch reads VCLYSFIIIILTGVYLTLFFH. Heme-binding residues include H118 and H132. The next 3 membrane-spanning stretches (helical) occupy residues 122–142, 150–170, and 182–202; these read ALIFLAGMFVHMMRVFFTGAF, WLFGFLLLVLGMFTGFTGYSL, and FMEGAILSVPIVGTYISFFLF. Residues H219 and H234 each coordinate heme. A run of 5 helical transmembrane segments spans residues 220 to 240, 269 to 289, 334 to 354, 389 to 409, and 417 to 437; these read ILLLPGIMLGLLVGHLILVFY, AGGFFFLVFGVISVVSAIATI, LVLGVFVPLLIFPLVLAAIAV, FGVAWLTVYFVLLIGGGNDLW, and INAITWFVRIAFFVGPVVAFI.

Belongs to the cytochrome b family. In terms of assembly, the cytochrome bc1 complex is composed of a cytochrome b (QcrB), the Rieske iron-sulfur protein (QcrA) and a diheme cytochrome c (QcrC) subunit. Heme serves as cofactor.

It is found in the cell membrane. It catalyses the reaction a quinol + 2 Fe(III)-[cytochrome c](out) = a quinone + 2 Fe(II)-[cytochrome c](out) + 2 H(+)(out). In terms of biological role, cytochrome b subunit of the cytochrome bc1 complex, an essential component of the respiratory electron transport chain required for ATP synthesis. The bc1 complex catalyzes the oxidation of ubiquinol and the reduction of cytochrome c in the respiratory chain. The bc1 complex operates through a Q-cycle mechanism that couples electron transfer to generation of the proton gradient that drives ATP synthesis. The cytochrome b subunit contains two ubiquinol reactive sites: the oxidation (QP) site and the reduction (QN) site. In Streptomyces lividans, this protein is Cytochrome bc1 complex cytochrome b subunit (qcrB).